A 315-amino-acid chain; its full sequence is Ribose-phosphate pyrophosphokinase (315 aa).

ATP is bound by residues 37–39 (DGE) and 96–97 (RQ). Mg(2+) is bound by residues histidine 131 and aspartate 171. Lysine 195 is an active-site residue. D-ribose 5-phosphate-binding positions include arginine 197, aspartate 221, and 225 to 229 (DTGGT).

It belongs to the ribose-phosphate pyrophosphokinase family. Class I subfamily. Homohexamer. Mg(2+) is required as a cofactor.

Its subcellular location is the cytoplasm. It catalyses the reaction D-ribose 5-phosphate + ATP = 5-phospho-alpha-D-ribose 1-diphosphate + AMP + H(+). Its pathway is metabolic intermediate biosynthesis; 5-phospho-alpha-D-ribose 1-diphosphate biosynthesis; 5-phospho-alpha-D-ribose 1-diphosphate from D-ribose 5-phosphate (route I): step 1/1. Involved in the biosynthesis of the central metabolite phospho-alpha-D-ribosyl-1-pyrophosphate (PRPP) via the transfer of pyrophosphoryl group from ATP to 1-hydroxyl of ribose-5-phosphate (Rib-5-P). This is Ribose-phosphate pyrophosphokinase from Haemophilus influenzae (strain ATCC 51907 / DSM 11121 / KW20 / Rd).